A 632-amino-acid polypeptide reads, in one-letter code: Epsin-3 (632 aa).

The a 1,2-diacyl-sn-glycero-3-phospho-(1D-myo-inositol-4,5-bisphosphate) site is built by R8, K11, R25, N30, R63, and H73. The region spanning 12–144 is the ENTH domain; it reads NIVHNYSEAE…KDEERLRQER (133 aa). The tract at residues 172–214 is disordered; the sequence is YGEDYSRSRGSPSSYNSSSSSPRYTSDLEQARPQTSGEEELQL. Over residues 179-196 the composition is skewed to low complexity; it reads SRGSPSSYNSSSSSPRYT. A phosphoserine mark is found at S191 and S192. UIM domains follow at residues 209–228 and 236–255; these read EEEL…AEKP and DEDL…HEKE. The interval 257–296 is disordered; that stretch reads RSWQGDGSPMANGAGAVVHHQRDREPEREERKEEEKLKTS. A Phosphoserine modification is found at S264. Over residues 276 to 294 the composition is skewed to basic and acidic residues; it reads HQRDREPEREERKEEEKLK. Repeat copies occupy residues 321 to 323, 344 to 346, 371 to 373, 387 to 389, 404 to 406, 524 to 526, 537 to 539, and 629 to 631. Residues 321-406 are 5 X 3 AA repeats of [DE]-P-W; that stretch reads DPWDIPGFRP…KLPSTGADPW (86 aa). 3 disordered regions span residues 326–501, 525–560, and 604–632; these read PGFR…SFLG, PFLT…PALG, and AFAP…NPFL. Positions 353 to 371 are enriched in polar residues; that stretch reads TVLSRSQPWDLTPMLSSSE. A 3 X 3 AA repeats of N-P-F region spans residues 524 to 631; the sequence is NPFLTGLSAP…PPPQTGTNPF (108 aa).

Belongs to the epsin family. As to expression, detected in migrating keratinocytes from wounded skin, but not in differentiating keratinocytes or in normal skin. Detected in chronic wounds, basal cell carcinoma and ulcerative colitis.

Its subcellular location is the cytoplasm. The protein resides in the perinuclear region. It localises to the cytoplasmic vesicle. The protein localises to the clathrin-coated vesicle. It is found in the nucleus. In Homo sapiens (Human), this protein is Epsin-3 (EPN3).